A 408-amino-acid chain; its full sequence is UDP-N-acetylglucosamine--dolichyl-phosphate N-acetylglucosaminephosphotransferase (408 aa).

Over 1–10 (MWAFPELPLP) the chain is Lumenal. A helical membrane pass occupies residues 11 to 38 (LLVNLFGSLLGFVATVTLIPAFRSHFIA). The Cytoplasmic portion of the chain corresponds to 39 to 58 (ARLCGQDLNKLSRQQIPESQ). UDP-N-acetyl-alpha-D-glucosamine contacts are provided by residues 44–46 (QDL) and glutamate 56. A helical membrane pass occupies residues 59-78 (GVICGAVFLIILFCFIPFPF). Topologically, residues 79 to 91 (LNCFVEEQCKAFP) are lumenal. Residues 92–118 (HHEFVALIGALLAICCMIFLGFADDVL) form a helical membrane-spanning segment. Residues 119–121 (NLP) are Cytoplasmic-facing. A helical transmembrane segment spans residues 122 to 143 (WRHKLLLPTAASLPLLMVYFTN). Residue lysine 125 coordinates dolichyl phosphate. At 144–166 (FGNTTIVVPKPFRWILGLHLDLG) the chain is on the lumenal side. Asparagine 146 carries an N-linked (GlcNAc...) asparagine glycan. Residues 167–186 (ILYYVYMGLLAVFCTNAINI) traverse the membrane as a helical segment. 178 to 186 (VFCTNAINI) lines the dolichyl phosphate pocket. Residue asparagine 185 participates in Mg(2+) binding. The Cytoplasmic segment spans residues 187–192 (LAGING). Asparagine 191 serves as a coordination point for UDP-N-acetyl-alpha-D-glucosamine. A helical membrane pass occupies residues 193-213 (LEAGQSLVISASIIVFNLVEL). At 214 to 218 (EGDYR) the chain is on the lumenal side. A helical membrane pass occupies residues 219 to 242 (DDHVFSLYFMIPFFFTTLGLLYHN). Topologically, residues 243–250 (WYPSQVFV) are cytoplasmic. Residues 251-269 (GDTFCYFAGMTFAVVGILG) traverse the membrane as a helical segment. Aspartate 252 is a Mg(2+) binding site. At 270–271 (HF) the chain is on the lumenal side. The chain crosses the membrane as a helical span at residues 272 to 293 (SKTMLLFFIPQVFNFLYSLPQL). The Cytoplasmic portion of the chain corresponds to 294 to 375 (LHAIPCPRHR…LLLKIFGPIH (82 aa)). Position 301 to 303 (301 to 303 (RHR)) interacts with UDP-N-acetyl-alpha-D-glucosamine. A helical membrane pass occupies residues 376 to 400 (ERNLTLLLLLLQILSSAVTFSIRYQ). The Lumenal segment spans residues 401-408 (LVRLFYDV).

The protein belongs to the glycosyltransferase 4 family. Homodimer. It depends on Mg(2+) as a cofactor.

It localises to the endoplasmic reticulum membrane. The enzyme catalyses a di-trans,poly-cis-dolichyl phosphate + UDP-N-acetyl-alpha-D-glucosamine = an N-acetyl-alpha-D-glucosaminyl-diphospho-di-trans,poly-cis-dolichol + UMP. It participates in protein modification; protein glycosylation. With respect to regulation, inhibited by natural nucleoside antibiotic tunicamycin, which acts as a structural analog and competitor of UDP-GlcNAc. Its function is as follows. UDP-N-acetylglucosamine--dolichyl-phosphate N-acetylglucosaminephosphotransferase that operates in the biosynthetic pathway of dolichol-linked oligosaccharides, the glycan precursors employed in protein asparagine (N)-glycosylation. The assembly of dolichol-linked oligosaccharides begins on the cytosolic side of the endoplasmic reticulum membrane and finishes in its lumen. The sequential addition of sugars to dolichol pyrophosphate produces dolichol-linked oligosaccharides containing fourteen sugars, including two GlcNAcs, nine mannoses and three glucoses. Once assembled, the oligosaccharide is transferred from the lipid to nascent proteins by oligosaccharyltransferases. Catalyzes the initial step of dolichol-linked oligosaccharide biosynthesis, transfering GlcNAc-1-P from cytosolic UDP-GlcNAc onto the carrier lipid dolichyl phosphate (P-dolichol), yielding GlcNAc-P-P-dolichol embedded in the cytoplasmic leaflet of the endoplasmic reticulum membrane. This is UDP-N-acetylglucosamine--dolichyl-phosphate N-acetylglucosaminephosphotransferase (DPAGT1) from Cricetulus longicaudatus (Long-tailed dwarf hamster).